A 158-amino-acid polypeptide reads, in one-letter code: NKG2-F type II integral membrane protein (158 aa).

Positions 1–12 (MNKQRGTYSEVS) are enriched in polar residues. The interval 1-25 (MNKQRGTYSEVSLAQDPKRQQRKLK) is disordered. Residues 1–74 (MNKQRGTYSE…LPPPEKLTAE (74 aa)) lie on the Cytoplasmic side of the membrane. A helical; Signal-anchor for type II membrane protein transmembrane segment spans residues 75-95 (VLGIICIVLMATVLKTIVLIP). Residues 96 to 158 (CIGVLEQNNF…VLRRTLICFL (63 aa)) lie on the Extracellular side of the membrane.

Can form disulfide-bonded heterodimer with CD94. As to expression, natural killer cells.

The protein resides in the membrane. Functionally, may play a role as a receptor for the recognition of MHC class I HLA-E molecules by NK cells. This Homo sapiens (Human) protein is NKG2-F type II integral membrane protein (KLRC4).